The following is a 498-amino-acid chain: Guanosine-5'-triphosphate,3'-diphosphate pyrophosphatase (498 aa).

Belongs to the GppA/Ppx family. GppA subfamily.

It carries out the reaction guanosine 3'-diphosphate 5'-triphosphate + H2O = guanosine 3',5'-bis(diphosphate) + phosphate + H(+). The protein operates within purine metabolism; ppGpp biosynthesis; ppGpp from GTP: step 2/2. Catalyzes the conversion of pppGpp to ppGpp. Guanosine pentaphosphate (pppGpp) is a cytoplasmic signaling molecule which together with ppGpp controls the 'stringent response', an adaptive process that allows bacteria to respond to amino acid starvation, resulting in the coordinated regulation of numerous cellular activities. This chain is Guanosine-5'-triphosphate,3'-diphosphate pyrophosphatase, found in Serratia proteamaculans (strain 568).